The following is a 4723-amino-acid chain: [F-actin]-monooxygenase Mical (4723 aa).

The span at 1–16 shows a compositional bias: basic residues; it reads MSRQHQRHHQQHHHLP. The interval 1–36 is disordered; that stretch reads MSRQHQRHHQQHHHLPPHQQPQQQMPQQQQQLTAQQ. Residues 1 to 520 are monooxygenase domain; it reads MSRQHQRHHQ…LNRESVNSWQ (520 aa). Residues 20–36 show a composition bias toward low complexity; sequence QPQQQMPQQQQQLTAQQ. FAD is bound by residues cysteine 138, 157–159, 164–166, phenylalanine 224, tyrosine 334, and aspartate 434; these read EKR and RNN. The Calponin-homology (CH) domain occupies 562-669; it reads LPQGATLLRW…YLDQICDLFR (108 aa). 3 disordered regions span residues 746 to 795, 948 to 993, and 1026 to 1053; these read NIGG…RQQR, KKTE…FKDI, and QFGKKDEANSDEKNAGSSNATTNTNNTV. A compositionally biased stretch (low complexity) spans 753–769; sequence GAAAGVAGSGTGTTTQG. Composition is skewed to basic and acidic residues over residues 783–795, 948–966, 980–993, and 1028–1039; these read VDKTANIEERQQR, KKTEIHGPKGREKVPKWSK, QRQDSREAEKFKDI, and GKKDEANSDEKN. Threonine 1049 carries the post-translational modification Phosphothreonine. Residues 1072–1136 enclose the LIM zinc-binding domain; that stretch reads EKCRFCKQTV…TQHFRLPPKP (65 aa). Zn(2+) contacts are provided by cysteine 1074, cysteine 1077, histidine 1095, cysteine 1098, cysteine 1101, cysteine 1104, cysteine 1126, and histidine 1129. The tract at residues 1130 to 1182 is disordered; the sequence is FRLPPKPLPQRTNKARKSAAAQPASPAVPPTAGSVPTAAATSEHMDTTPPRDQ. Residues serine 1194, serine 1199, and serine 1212 each carry the phosphoserine modification. 5 disordered regions span residues 1212–1378, 1434–1591, 1614–1648, 1684–1781, and 1797–1825; these read SGRN…PRKF, AGQK…NSKL, TVSAQAPPSMDLSKYFPNQKQEKSSTSSTNKNQVT, ALAK…TATS, and TKAKKAAEAAQESAVVEAPPEKKPPKDEA. Residues 1219-1229 are compositionally biased toward low complexity; sequence ESNNDSQSELS. Composition is skewed to acidic residues over residues 1230-1248 and 1269-1294; these read SSDESDTESDSEMFEEADD and EDSDDSDDFYDSSEGIADDGKDDTEG. 2 stretches are compositionally biased toward basic and acidic residues: residues 1295–1308 and 1322–1341; these read EEFKKARELRRQEV and ETEKLKLNVDNKENMADRSS. The LRR 1 repeat unit spans residues 1297-1320; it reads FKKARELRRQEVRLQPLPANLPTD. The span at 1342 to 1363 shows a compositional bias: polar residues; it reads LKSGNSFESARSQPSTPLSTPT. Composition is skewed to basic and acidic residues over residues 1365–1378 and 1483–1507; these read VEMEQLERNAPRKF and DELKPRKPNFEERPKEQLPRPESLK. Polar residues predominate over residues 1516 to 1535; sequence GSSTNVSRSNSLKSNASNGS. Over residues 1568–1578 the composition is skewed to acidic residues; sequence DQDEDMDVDED. Residues 1579-1591 are compositionally biased toward basic and acidic residues; it reads VERKPNKELNSKL. An LRR 2 repeat occupies 1579–1601; that stretch reads VERKPNKELNSKLKEIQASSFAG. The segment covering 1629–1648 has biased composition (polar residues); the sequence is FPNQKQEKSSTSSTNKNQVT. Residues 1700-1721 show a composition bias toward basic and acidic residues; sequence EKTKKEVEKEGESKKITKKVAD. The stretch at 1730–1754 is one LRR 3 repeat; that stretch reads QASLDTFSLREHQMDGALDLTKKKG. Low complexity-rich tracts occupy residues 1767–1781 and 1804–1814; these read KSGSTTSVTKATATS and EAAQESAVVEA. Basic and acidic residues predominate over residues 1815–1825; sequence PPEKKPPKDEA. The LRR 4 repeat unit spans residues 1931-1956; the sequence is AFKLRRMESTTSNLSSLTRSRESLVS. A compositionally biased stretch (basic and acidic residues) spans 1992–2009; the sequence is AKKEEQEKESKILAKPDP. Disordered regions lie at residues 1992–2013, 2028–2092, 2145–2172, 2329–2379, 2418–2549, 2604–2676, and 2699–2866; these read AKKEEQEKESKILAKPDPLDNL, LAAS…KPAS, KNLPKTGCDKSSNSSRRGSQSSLIMSRR, NVQD…DMPP, EDVD…PRRN, AEQR…STSC, and PKKL…TTTT. Low complexity-rich tracts occupy residues 2155–2169 and 2349–2358; these read SSNSSRRGSQSSLIM and SSSSSSEPSL. The segment covering 2423-2450 has biased composition (basic and acidic residues); the sequence is VDHSKEGIKKIETAPEEVRKVTEPEDVA. The span at 2453–2476 shows a compositional bias: low complexity; that stretch reads IPSPIKPSISQSNSLKSENSSGSS. Over residues 2490–2502 the composition is skewed to basic and acidic residues; sequence SSKENSSDWDMEK. One copy of the LRR 5 repeat lies at 2548 to 2574; the sequence is RNKMRAISPSTNPVQLLNNLPSDVDDE. The segment covering 2612-2623 has biased composition (low complexity); that stretch reads LQSSSNSSSKRS. A compositionally biased stretch (polar residues) spans 2636–2648; it reads RGTTQDTNRTQDT. Residues 2649–2664 show a composition bias toward basic and acidic residues; sequence ASRHEGTPPMFKKLDV. Over residues 2667–2676 the composition is skewed to polar residues; it reads SGTSMDSTSC. An LRR 6 repeat occupies 2680-2704; sequence RSSFAFIELQDNKPVIVPMPKKLKL. Acidic residues predominate over residues 2739–2752; that stretch reads GEVDLGDSDNEDET. A compositionally biased stretch (basic and acidic residues) spans 2777 to 2791; sequence KWPDGKTVFDKRAES. The span at 2846–2866 shows a compositional bias: low complexity; the sequence is SLQSLSAQSSQDTDTLSTTTT. The LRR 7 repeat unit spans residues 2934 to 2957; that stretch reads LTSYRPRHYASSTLNRFPNTTIRK. Disordered stretches follow at residues 3411-3456 and 3468-3488; these read HIKE…PDSV and SKPEVMSTTGSSGSICSSSDS. Over residues 3435 to 3451 the composition is skewed to basic and acidic residues; the sequence is EEKRDSPEKDVAEHELY. Positions 3474–3488 are enriched in low complexity; sequence STTGSSGSICSSSDS. LRR repeat units lie at residues 3545–3568 and 3642–3665; these read PEDVKFLDMPANVIVPPAPALKTN and SQAVKPITLNLSNLARTPDTPTTP. Disordered regions lie at residues 3655–3694, 3809–3830, 3888–3909, 3922–3962, 3983–4037, 4072–4150, 4260–4284, and 4317–4347; these read LARTPDTPTTPTAHDSDKTPTGEILSRGSDSETEHTGTGQ, PKKTTRKAAPPSSYPGNLPPLM, QPTTTEESEALTVVTSPLDTSS, AGKG…EPQE, STQR…VPEI, LNAE…SPYR, QNRSLKPKQLEEMPSGDLAARARKM, and DFTSDPNLASGGQEKAGKTKSGRRPKDPERR. 2 stretches are compositionally biased toward polar residues: residues 3900 to 3909 and 3927 to 3937; these read VVTSPLDTSS and STPSSSEQQPK. Residues 3938-3957 show a composition bias toward low complexity; the sequence is TSTVTSSSTGPNSSTTGNVS. Composition is skewed to polar residues over residues 4084–4099 and 4109–4118; these read RSLLTSGYASGSSLSP and PQDSNCSSQA. 2 stretches are compositionally biased toward basic and acidic residues: residues 4127–4137 and 4260–4270; these read EAPKPPAERPL and QNRSLKPKQLE. A phosphoserine mark is found at serine 4349 and serine 4353. Low complexity-rich tracts occupy residues 4360-4374 and 4387-4396; these read KGSGSAASSSKEQGG and PGTSSSGTPT. Positions 4360–4414 are disordered; the sequence is KGSGSAASSSKEQGGAVAAVHSEQSERPGTSSSGTPTISDAAGGGGGGGGVFSRF. Residues 4401 to 4410 show a composition bias toward gly residues; it reads AGGGGGGGGV. At serine 4426 the chain carries Phosphoserine. Disordered stretches follow at residues 4449–4492 and 4505–4544; these read AGAT…SSPQ and HPSALDDQTPPPIPPLPLNYQRSDDESYANETREHKKQRA. Residues 4450-4479 are compositionally biased toward polar residues; the sequence is GATSASQKNHSQEYLNTTNNSRYRKQTNTA. Residues 4550-4705 enclose the bMERB domain; the sequence is RQAELKRLRI…AAGSASTSAE (156 aa). One copy of the LRR 10 repeat lies at 4646 to 4668; sequence KEELNLRLSCNKLDKSSADVAAE. The segment at 4704–4723 is disordered; it reads AEATGIKLTGQPHDHEESII.

The protein belongs to the Mical family. As to quaternary structure, interacts with plexA. It depends on FAD as a cofactor. As to expression, present in neuronal cell bodies, along axons, and in growth cones. Appears in the nervous system at stage 13 and labels motor and CNS projections, and at later embryonic stages, it is present on axons that make up all motor axon pathways: the intersegmental nerve (ISN), the intersegmental nerves b and d (ISNb and ISNd), and the segmental nerves a and c (SNa and SNc). Also present in segment boundaries at the position of muscle attachment sites and at low levels in the lateral cluster of chordotonal organs (at protein level). Localizes to growing bristle tips in close proximity to the bristle cell membrane and at sites of bristle branching and actin localization. Localizes to growth cones.

The protein resides in the cytoplasm. It catalyses the reaction L-methionyl-[F-actin] + NADPH + O2 + H(+) = L-methionyl-(R)-S-oxide-[F-actin] + NADP(+) + H2O. Its function is as follows. Monooxygenase that promotes depolymerization of F-actin by mediating oxidation of specific methionine residues on actin. Acts by modifying actin subunits at 'Met-44' and 'Met-47' through the addition of oxygen to form methionine-sulfoxide, leading to promote actin filament disassembly and prevent repolymerization. Plays a key role in semaphorin-plexin repulsive axon guidance and cell morphological changes, probably via its ability to modify and regulate actin. The sequence is that of [F-actin]-monooxygenase Mical (Mical) from Drosophila melanogaster (Fruit fly).